A 40-amino-acid chain; its full sequence is Hemoglobin subunit alpha-2 (40 aa).

The region spanning 1-40 is the Globin domain; sequence VGPHLDDYGGEALHRNFEVYPQTKTYFPHFDASAGSNQLK.

This sequence belongs to the globin family. As to quaternary structure, heterotetramer of two alpha chains and two beta chains. In terms of tissue distribution, red blood cells.

Functionally, involved in oxygen transport from the lung to the various peripheral tissues. The polypeptide is Hemoglobin subunit alpha-2 (Saara hardwickii (Indian spiny-tailed lizard)).